The primary structure comprises 363 residues: Phospho-N-acetylmuramoyl-pentapeptide-transferase (363 aa).

The next 10 helical transmembrane spans lie at 27–47 (SGCA…PFIA), 76–96 (TMGG…WADL), 97–117 (TNGF…VGFA), 137–157 (LGCE…LTPP), 171–191 (VLLP…TGFG), 202–222 (GLAI…SYLV), 242–262 (LAVF…FNAP), 265–285 (AVFM…AVAV), 292–312 (VLCI…IQIF), and 340–360 (KIVI…LATL).

Belongs to the glycosyltransferase 4 family. MraY subfamily. It depends on Mg(2+) as a cofactor.

It is found in the cell inner membrane. The catalysed reaction is UDP-N-acetyl-alpha-D-muramoyl-L-alanyl-gamma-D-glutamyl-meso-2,6-diaminopimeloyl-D-alanyl-D-alanine + di-trans,octa-cis-undecaprenyl phosphate = di-trans,octa-cis-undecaprenyl diphospho-N-acetyl-alpha-D-muramoyl-L-alanyl-D-glutamyl-meso-2,6-diaminopimeloyl-D-alanyl-D-alanine + UMP. Its pathway is cell wall biogenesis; peptidoglycan biosynthesis. In terms of biological role, catalyzes the initial step of the lipid cycle reactions in the biosynthesis of the cell wall peptidoglycan: transfers peptidoglycan precursor phospho-MurNAc-pentapeptide from UDP-MurNAc-pentapeptide onto the lipid carrier undecaprenyl phosphate, yielding undecaprenyl-pyrophosphoryl-MurNAc-pentapeptide, known as lipid I. This chain is Phospho-N-acetylmuramoyl-pentapeptide-transferase, found in Gluconobacter oxydans (strain 621H) (Gluconobacter suboxydans).